The sequence spans 388 residues: Beta-lactamase (388 aa).

A signal peptide spans 1-24; that stretch reads MMKKSIINTLIFTSIATFPLYTLA. The active-site Acyl-ester intermediate is the S89. Y175 functions as the Proton acceptor in the catalytic mechanism. 342–344 is a binding site for substrate; the sequence is KTG.

This sequence belongs to the class-C beta-lactamase family.

Its subcellular location is the periplasm. The catalysed reaction is a beta-lactam + H2O = a substituted beta-amino acid. In terms of biological role, this protein is a serine beta-lactamase with a substrate specificity for cephalosporins. The chain is Beta-lactamase (ampC) from Yersinia enterocolitica.